The chain runs to 123 residues: Small ribosomal subunit protein uS12 (123 aa).

The disordered stretch occupies residues 9–32 (ANPREVQKSRKKVPALQQSPQKRG). Residue Asp-89 is modified to 3-methylthioaspartic acid.

Belongs to the universal ribosomal protein uS12 family. As to quaternary structure, part of the 30S ribosomal subunit. Contacts proteins S8 and S17. May interact with IF1 in the 30S initiation complex.

Its function is as follows. With S4 and S5 plays an important role in translational accuracy. Functionally, interacts with and stabilizes bases of the 16S rRNA that are involved in tRNA selection in the A site and with the mRNA backbone. Located at the interface of the 30S and 50S subunits, it traverses the body of the 30S subunit contacting proteins on the other side and probably holding the rRNA structure together. The combined cluster of proteins S8, S12 and S17 appears to hold together the shoulder and platform of the 30S subunit. This is Small ribosomal subunit protein uS12 from Bradyrhizobium sp. (strain BTAi1 / ATCC BAA-1182).